Reading from the N-terminus, the 91-residue chain is DNA-binding protein HU (91 aa).

This sequence belongs to the bacterial histone-like protein family. Homodimer.

Its function is as follows. Histone-like DNA-binding protein which is capable of wrapping DNA to stabilize it, and thus to prevent its denaturation under extreme environmental conditions. The chain is DNA-binding protein HU (hup) from Lactococcus lactis subsp. lactis (strain IL1403) (Streptococcus lactis).